Reading from the N-terminus, the 281-residue chain is UPF0294 protein VC_2238 (281 aa).

The protein belongs to the UPF0294 family.

It is found in the cytoplasm. This is UPF0294 protein VC_2238 from Vibrio cholerae serotype O1 (strain ATCC 39315 / El Tor Inaba N16961).